A 245-amino-acid chain; its full sequence is MFKAAINAELLKDAIAALAVIVDEVRFKIKPEGISVKAVDPANVAMGIFELGSSAFDEYSADECEIGLDLNKITDLLGIADRNDTVRMGLEEGSNKLLIDVGGLSYTLSLLDPSTIRAEPRVPQLELPAKVVLNGADLRRAVKAAEKISDHMLMGVSGDTFYMEAKGDTDQVRLEMGRDQLIDLKAGEACSLFSLDYLTDIVKPTNKVNEVTLSLGRDFPILIDFEIANGAGRISYLLAPRIESD.

This sequence belongs to the PCNA family. In terms of assembly, homotrimer. The subunits circularize to form a toroid; DNA passes through its center. Replication factor C (RFC) is required to load the toroid on the DNA.

In terms of biological role, sliding clamp subunit that acts as a moving platform for DNA processing. Responsible for tethering the catalytic subunit of DNA polymerase and other proteins to DNA during high-speed replication. The polypeptide is DNA polymerase sliding clamp (Methanosarcina acetivorans (strain ATCC 35395 / DSM 2834 / JCM 12185 / C2A)).